Consider the following 427-residue polypeptide: 3-phosphoshikimate 1-carboxyvinyltransferase (427 aa).

Lysine 22, serine 23, and arginine 27 together coordinate 3-phosphoshikimate. Phosphoenolpyruvate is bound at residue lysine 22. The phosphoenolpyruvate site is built by glycine 94 and arginine 122. Serine 165, glutamine 167, aspartate 313, and lysine 340 together coordinate 3-phosphoshikimate. Position 167 (glutamine 167) interacts with phosphoenolpyruvate. Residue aspartate 313 is the Proton acceptor of the active site. Positions 344 and 386 each coordinate phosphoenolpyruvate.

The protein belongs to the EPSP synthase family. As to quaternary structure, monomer.

It is found in the cytoplasm. It carries out the reaction 3-phosphoshikimate + phosphoenolpyruvate = 5-O-(1-carboxyvinyl)-3-phosphoshikimate + phosphate. It participates in metabolic intermediate biosynthesis; chorismate biosynthesis; chorismate from D-erythrose 4-phosphate and phosphoenolpyruvate: step 6/7. Its function is as follows. Catalyzes the transfer of the enolpyruvyl moiety of phosphoenolpyruvate (PEP) to the 5-hydroxyl of shikimate-3-phosphate (S3P) to produce enolpyruvyl shikimate-3-phosphate and inorganic phosphate. In Koribacter versatilis (strain Ellin345), this protein is 3-phosphoshikimate 1-carboxyvinyltransferase.